The sequence spans 94 residues: Integration host factor subunit beta (94 aa).

This sequence belongs to the bacterial histone-like protein family. In terms of assembly, heterodimer of an alpha and a beta chain.

This protein is one of the two subunits of integration host factor, a specific DNA-binding protein that functions in genetic recombination as well as in transcriptional and translational control. This Citrobacter koseri (strain ATCC BAA-895 / CDC 4225-83 / SGSC4696) protein is Integration host factor subunit beta.